We begin with the raw amino-acid sequence, 382 residues long: Cytoplasmic tRNA 2-thiolation protein 2 (382 aa).

This sequence belongs to the CTU2/NCS2 family.

It is found in the cytoplasm. It participates in tRNA modification; 5-methoxycarbonylmethyl-2-thiouridine-tRNA biosynthesis. In terms of biological role, plays a central role in 2-thiolation of mcm(5)S(2)U at tRNA wobble positions of tRNA(Lys), tRNA(Glu) and tRNA(Gln). May act by forming a heterodimer with NCS6 that ligates sulfur from thiocarboxylated URM1 onto the uridine of tRNAs at wobble position. Prior mcm(5) tRNA modification by the elongator complex is required for 2-thiolation. May also be involved in protein urmylation. This chain is Cytoplasmic tRNA 2-thiolation protein 2, found in Phaeosphaeria nodorum (strain SN15 / ATCC MYA-4574 / FGSC 10173) (Glume blotch fungus).